Consider the following 333-residue polypeptide: HTH-type transcriptional repressor PurR (333 aa).

The region spanning Ala-2–Val-56 is the HTH lacI-type domain. The segment at residues Ile-4 to Asn-23 is a DNA-binding region (H-T-H motif). Residues Ser-48 to Val-56 mediate DNA binding. Residues Tyr-73, Lys-189, Thr-191, Phe-220, and Asp-274 each coordinate hypoxanthine.

In terms of assembly, homodimer.

The protein operates within purine metabolism; purine nucleotide biosynthesis [regulation]. Is the main repressor of the genes involved in the de novo synthesis of purine nucleotides, regulating purB, purC, purEK, purF, purHD, purL, purMN and guaBA expression. PurR is allosterically activated to bind its cognate DNA by binding the purine corepressors, hypoxanthine or guanine, thereby effecting transcription repression. This chain is HTH-type transcriptional repressor PurR, found in Histophilus somni (strain 2336) (Haemophilus somnus).